A 153-amino-acid chain; its full sequence is Alpha-amylase inhibitor 0.28 (153 aa).

The signal sequence occupies residues 1–30 (MWMKTVFWGLLVFMLVATTMAVEYGARSHN). Cystine bridges form between cysteine 37–cysteine 84, cysteine 51–cysteine 72, cysteine 59–cysteine 112, cysteine 73–cysteine 128, and cysteine 86–cysteine 143.

Belongs to the protease inhibitor I6 (cereal trypsin/alpha-amylase inhibitor) family. Monomer. In terms of processing, the disulfide bonds are essential for the inhibitor activity. Endosperm.

The protein resides in the secreted. Its function is as follows. Alpha-amylase inhibitor. The protein is Alpha-amylase inhibitor 0.28 (IMA1) of Triticum aestivum (Wheat).